We begin with the raw amino-acid sequence, 281 residues long: Penicillin-insensitive murein endopeptidase (281 aa).

The N-terminal stretch at 1–24 is a signal peptide; sequence MKQGLIGVLALALGATLLSSAVWA. Cystine bridges form between cysteine 49–cysteine 270, cysteine 192–cysteine 240, and cysteine 221–cysteine 228. Histidine 115, histidine 118, aspartate 125, and histidine 216 together coordinate Zn(2+). The segment at 230–271 is disordered; the sequence is EQSEPPIGDGCGAELTSWFQPKQPSSEAPEKTTPPPLPPSCQ. The segment covering 246 to 255 has biased composition (polar residues); it reads SWFQPKQPSS.

This sequence belongs to the peptidase M74 family. As to quaternary structure, dimer. Zn(2+) is required as a cofactor.

The protein resides in the periplasm. Functionally, murein endopeptidase that cleaves the D-alanyl-meso-2,6-diamino-pimelyl amide bond that connects peptidoglycan strands. Likely plays a role in the removal of murein from the sacculus. This Pectobacterium atrosepticum (strain SCRI 1043 / ATCC BAA-672) (Erwinia carotovora subsp. atroseptica) protein is Penicillin-insensitive murein endopeptidase (mepA).